The following is a 515-amino-acid chain: Maturase K (515 aa).

It belongs to the intron maturase 2 family. MatK subfamily.

The protein resides in the plastid. It localises to the chloroplast. Its function is as follows. Usually encoded in the trnK tRNA gene intron. Probably assists in splicing its own and other chloroplast group II introns. The polypeptide is Maturase K (Larix laricina (Tamarack)).